The chain runs to 123 residues: WAP four-disulfide core domain protein 5 (123 aa).

The N-terminal stretch at 1–24 (MRIQSLLLLGALLAVGSQLPAVFG) is a signal peptide. 2 WAP domains span residues 27–73 (KGEK…CIPR) and 74–121 (VSVK…RDPA). 8 disulfide bridges follow: C34/C62, C41/C66, C49/C61, C55/C70, C81/C109, C88/C113, C96/C108, and C102/C117.

The protein localises to the secreted. In terms of biological role, putative acid-stable proteinase inhibitor. This is WAP four-disulfide core domain protein 5 (WFDC5) from Macaca mulatta (Rhesus macaque).